A 179-amino-acid polypeptide reads, in one-letter code: tRNA (cytidine(56)-2'-O)-methyltransferase (179 aa).

Residues Leu-82, 110 to 114 (GAEKV), and 128 to 135 (VGNQPHSE) contribute to the S-adenosyl-L-methionine site.

The protein belongs to the aTrm56 family. Homodimer.

It is found in the cytoplasm. It catalyses the reaction cytidine(56) in tRNA + S-adenosyl-L-methionine = 2'-O-methylcytidine(56) in tRNA + S-adenosyl-L-homocysteine + H(+). Specifically catalyzes the AdoMet-dependent 2'-O-ribose methylation of cytidine at position 56 in tRNAs. The polypeptide is tRNA (cytidine(56)-2'-O)-methyltransferase (Methanocaldococcus jannaschii (strain ATCC 43067 / DSM 2661 / JAL-1 / JCM 10045 / NBRC 100440) (Methanococcus jannaschii)).